Consider the following 453-residue polypeptide: Aryl hydrocarbon receptor nuclear translocator homolog (453 aa).

In terms of domain architecture, bHLH spans 44-97 (FARENHSEIERRRRNKMTHYINELAEMVPQCASLGRKPDKLTILRMAVSHMKGI). PAS domains are found at residues 115–193 (DQEL…LDLK) and 277–347 (ASMP…LSDQ). The PAC domain maps to 348–392 (PMRINIRVRTSTDYIPCTVSAYKFMNPYSEQFEYVVATHQIAPQE). A disordered region spans residues 410 to 453 (EFGELGGAPSAVDYGQSSSGGWRPEAQGAPQAQWQWDPMNGYNQ).

In terms of assembly, interacts with hif-1. Heterodimer; efficient DNA binding requires dimerization with another bHLH protein. Forms a heterodimer with ahr-1; binds DNA as heterodimer. Forms a heterodimer with PAS domain-containing protein cky-1; binds DNA as heterodimer. Expressed in many cell types throughout development, including hypodermal cells, intestinal cells, pharyngeal cells, and neurons. Expressed in every cell during embryo.

The protein resides in the nucleus. Functionally, transcription factor. Efficient DNA binding requires dimerization with another bHLH protein, such as cky-1 or ahr-1. Regulates transcription of target genes, probably acting in complex with cky-1. Has a role in cellular differentiation. Required for pharyngeal development. In collaboration with ahr-1 it is involved in RMEL/R and SDQR neuron cell migration. Acts in the cellular response to hypoxia. Involved in aggregation behavior by regulating soluble guanylate cyclase gene expression in the URX neurons. This chain is Aryl hydrocarbon receptor nuclear translocator homolog, found in Caenorhabditis elegans.